The sequence spans 284 residues: MTIVNLAAYHFVSLDANEQWRPLVTARCNELGLRGTILLAPEGINLFIAGTREATDAFIAYIRHDPLFEGKFATLQFKESLSDSQPFRRMLVRLKREIITMKKPAIKPELGRAPFVDARTLKSWLDRGHDDTGRPVVMLDTRNAFEVDVGTFDNALDYRIDKFSEFPEVIDANRADLEGKTVVSFCTGGIRCEKAAIHMKEIGIDNVYQLEGGILKYFEEVGGAHYHGDCFVFDYRTALNPQLQPTENVTCFACRAVVTPEAQRSPSYVAGKSCPACAQAASAA.

Positions 132-226 (TGRPVVMLDT…YFEEVGGAHY (95 aa)) constitute a Rhodanese domain. Cys186 acts as the Cysteine persulfide intermediate in catalysis.

The protein belongs to the TrhO family.

It catalyses the reaction uridine(34) in tRNA + AH2 + O2 = 5-hydroxyuridine(34) in tRNA + A + H2O. Its function is as follows. Catalyzes oxygen-dependent 5-hydroxyuridine (ho5U) modification at position 34 in tRNAs. The polypeptide is tRNA uridine(34) hydroxylase (Burkholderia cenocepacia (strain ATCC BAA-245 / DSM 16553 / LMG 16656 / NCTC 13227 / J2315 / CF5610) (Burkholderia cepacia (strain J2315))).